Reading from the N-terminus, the 124-residue chain is Small ribosomal subunit protein uS12 (124 aa).

Asp89 carries the 3-methylthioaspartic acid modification.

The protein belongs to the universal ribosomal protein uS12 family. Part of the 30S ribosomal subunit. Contacts proteins S8 and S17. May interact with IF1 in the 30S initiation complex.

With S4 and S5 plays an important role in translational accuracy. Its function is as follows. Interacts with and stabilizes bases of the 16S rRNA that are involved in tRNA selection in the A site and with the mRNA backbone. Located at the interface of the 30S and 50S subunits, it traverses the body of the 30S subunit contacting proteins on the other side and probably holding the rRNA structure together. The combined cluster of proteins S8, S12 and S17 appears to hold together the shoulder and platform of the 30S subunit. The chain is Small ribosomal subunit protein uS12 from Shewanella frigidimarina (strain NCIMB 400).